Reading from the N-terminus, the 250-residue chain is 26 kDa periplasmic immunogenic protein (250 aa).

The signal sequence occupies residues 1–28 (MNTRASNFLAASFSTIMLVGAFSLPAFA).

It is found in the periplasm. This Brucella melitensis biotype 1 (strain ATCC 23456 / CCUG 17765 / NCTC 10094 / 16M) protein is 26 kDa periplasmic immunogenic protein (bp26).